The chain runs to 266 residues: Type II iodothyronine deiodinase (266 aa).

Over 1–13 (MGSASEDLLVTLQ) the chain is Lumenal. The helical; Signal-anchor for type III membrane protein transmembrane segment at 14 to 34 (ILPGFFSNCLFLALYDSVVLV) threads the bilayer. The Cytoplasmic portion of the chain corresponds to 35-266 (KRVVALLSRS…QWLELSYGRR (232 aa)). U134 is an active-site residue. Residue U134 is a non-standard amino acid, selenocysteine.

This sequence belongs to the iodothyronine deiodinase family. As to quaternary structure, predominantly monomer. Can form homodimers but homodimerization is not essential for enzyme activity.

Its subcellular location is the endoplasmic reticulum membrane. It catalyses the reaction 3,3',5-triiodo-L-thyronine + iodide + A + H(+) = L-thyroxine + AH2. The catalysed reaction is 3,3'-diiodo-L-thyronine + iodide + A + H(+) = 3,3',5'-triiodo-L-thyronine + AH2. It carries out the reaction 3'-iodo-L-thyronine + iodide + A + H(+) = 3',5'-diiodo-L-thyronine + AH2. With respect to regulation, not inhibited by N(6)-propylthiouracil. Its function is as follows. Plays a crucial role in the metabolism of thyroid hormones (TH) and has specific roles in TH activation and inactivation by deiodination. Catalyzes the conversion of T4 (L-thyroxine/3,5,3',5'-tetraiodothyronine) to T3 (3,5,3'-triiodothyronine) and rT3 (3,3',5'-triiodothyronine) to T2 (3,3'-diiodothyronine) via outer-ring deiodination (ORD). Catalyzes the conversion 3',5'-T2 (3,5-diiodothyronine) to 3-T1 (3-monoiodothyronine) via ORD. The sequence is that of Type II iodothyronine deiodinase (dio2) from Fundulus heteroclitus (Killifish).